The primary structure comprises 539 residues: Interleukin-2 receptor subunit beta (539 aa).

Residues 1-26 form the signal peptide; sequence MATIALPWSLSLYVFLLLLATPWASA. At 27-240 the chain is on the extracellular side; it reads AVKNCSHLEC…RTRPADPMKE (214 aa). Asparagine 30, asparagine 43, asparagine 55, and asparagine 71 each carry an N-linked (GlcNAc...) asparagine glycan. An intrachain disulfide couples cysteine 36 to cysteine 46. Residues cysteine 74 and cysteine 86 are joined by a disulfide bond. The Fibronectin type-III domain maps to 135–235; it reads APHSLQVLHI…QPLTFRTRPA (101 aa). N-linked (GlcNAc...) asparagine glycosylation is found at asparagine 150 and asparagine 216. Positions 221–225 match the WSXWS motif motif; that stretch reads WSPWS. A helical membrane pass occupies residues 241 to 268; the sequence is ILPMSWLRYLLLVLGCFSGFFSCVYILV. Over 269-539 the chain is Cytoplasmic; it reads KCRYLGPWLK…LQAQDSVHLI (271 aa). Positions 281–289 match the Box 1 motif motif; that stretch reads LKCHIPDPS. Disordered regions lie at residues 395–419, 440–465, and 477–516; these read VEED…GEQD, PNTA…LPSL, and LERM…QGPI.

Belongs to the type I cytokine receptor family. Type 4 subfamily. Non-covalent dimer of an alpha and a beta subunit. IL2R exists in 3 different forms: a high affinity dimer, an intermediate affinity monomer (beta subunit), and a low affinity monomer (alpha subunit). The high and intermediate affinity forms also associate with a gamma subunit. Interacts with SHB upon interleukin stimulation.

The protein localises to the cell membrane. It is found in the cell surface. Receptor for interleukin-2. This beta subunit is involved in receptor mediated endocytosis and transduces the mitogenic signals of IL2. Probably in association with IL15RA, involved in the stimulation of neutrophil phagocytosis by IL15. The sequence is that of Interleukin-2 receptor subunit beta (Il2rb) from Mus musculus (Mouse).